Here is a 263-residue protein sequence, read N- to C-terminus: 3-methyl-2-oxobutanoate hydroxymethyltransferase (263 aa).

The Mg(2+) site is built by aspartate 45 and aspartate 84. Residues 45 to 46, aspartate 84, and lysine 112 contribute to the 3-methyl-2-oxobutanoate site; that span reads DS. Glutamate 114 is a binding site for Mg(2+). Residue glutamate 181 is the Proton acceptor of the active site.

This sequence belongs to the PanB family. Homodecamer; pentamer of dimers. Requires Mg(2+) as cofactor.

It localises to the cytoplasm. It catalyses the reaction 3-methyl-2-oxobutanoate + (6R)-5,10-methylene-5,6,7,8-tetrahydrofolate + H2O = 2-dehydropantoate + (6S)-5,6,7,8-tetrahydrofolate. The protein operates within cofactor biosynthesis; (R)-pantothenate biosynthesis; (R)-pantoate from 3-methyl-2-oxobutanoate: step 1/2. Functionally, catalyzes the reversible reaction in which hydroxymethyl group from 5,10-methylenetetrahydrofolate is transferred onto alpha-ketoisovalerate to form ketopantoate. The polypeptide is 3-methyl-2-oxobutanoate hydroxymethyltransferase (Proteus mirabilis (strain HI4320)).